The sequence spans 293 residues: Ribosomal protein L11 methyltransferase (293 aa).

4 residues coordinate S-adenosyl-L-methionine: T145, G166, D188, and N230.

The protein belongs to the methyltransferase superfamily. PrmA family.

It localises to the cytoplasm. It catalyses the reaction L-lysyl-[protein] + 3 S-adenosyl-L-methionine = N(6),N(6),N(6)-trimethyl-L-lysyl-[protein] + 3 S-adenosyl-L-homocysteine + 3 H(+). Its function is as follows. Methylates ribosomal protein L11. This chain is Ribosomal protein L11 methyltransferase, found in Shewanella baltica (strain OS185).